A 229-amino-acid chain; its full sequence is Orotate phosphoribosyltransferase (229 aa).

5-phospho-alpha-D-ribose 1-diphosphate-binding positions include arginine 107, lysine 108, lysine 111, histidine 113, and 133-141; that span reads EDLTTAGGS. Threonine 137 contacts orotate.

This sequence belongs to the purine/pyrimidine phosphoribosyltransferase family. PyrE subfamily. As to quaternary structure, homodimer. The cofactor is Mg(2+).

It carries out the reaction orotidine 5'-phosphate + diphosphate = orotate + 5-phospho-alpha-D-ribose 1-diphosphate. The protein operates within pyrimidine metabolism; UMP biosynthesis via de novo pathway; UMP from orotate: step 1/2. Functionally, catalyzes the transfer of a ribosyl phosphate group from 5-phosphoribose 1-diphosphate to orotate, leading to the formation of orotidine monophosphate (OMP). The chain is Orotate phosphoribosyltransferase from Rhizobium etli (strain CIAT 652).